Consider the following 1192-residue polypeptide: DNA topoisomerase 2 (1192 aa).

ATP is bound by residues asparagine 64, asparagine 95, and glycine 142–lysine 149. Glutamate 438, aspartate 539, and aspartate 541 together coordinate Mg(2+). One can recognise a Topo IIA-type catalytic domain in the interval isoleucine 707–isoleucine 1174. Tyrosine 800 (O-(5'-phospho-DNA)-tyrosine intermediate) is an active-site residue.

The protein belongs to the type II topoisomerase family. Requires Mg(2+) as cofactor. It depends on Mn(2+) as a cofactor. Ca(2+) serves as cofactor.

Its subcellular location is the host cytoplasm. It carries out the reaction ATP-dependent breakage, passage and rejoining of double-stranded DNA.. Its function is as follows. Type II topoisomerase. Processively relaxes supercoiled DNA. Displays DNA-supercoiling activity only when associated with the viral histone-like protein. This chain is DNA topoisomerase 2, found in African swine fever virus (isolate Tick/South Africa/Pretoriuskop Pr4/1996) (ASFV).